Here is a 159-residue protein sequence, read N- to C-terminus: Transcription elongation factor A protein-like 1 (159 aa).

Residues 1–120 form a disordered region; the sequence is MEKACKEPEE…PQFRGDIHGR (120 aa). Positions 17-34 are enriched in basic and acidic residues; that stretch reads KADEERPSVEPSPEKSSP. A compositionally biased stretch (acidic residues) spans 37 to 54; sequence QSSEEVSSEEEFFPDELL. Basic and acidic residues-rich tracts occupy residues 64–80 and 95–119; these read SEER…DLFE and HKLE…DIHG.

This sequence belongs to the TFS-II family. TFA subfamily.

It localises to the nucleus. Functionally, may be involved in transcriptional regulation. Modulates various viral and cellular promoters in a promoter context-dependent manner. Does not bind DNA directly. The polypeptide is Transcription elongation factor A protein-like 1 (Bos taurus (Bovine)).